The chain runs to 217 residues: Large ribosomal subunit protein uL3 (217 aa).

It belongs to the universal ribosomal protein uL3 family. As to quaternary structure, part of the 50S ribosomal subunit. Forms a cluster with proteins L14 and L19.

Its function is as follows. One of the primary rRNA binding proteins, it binds directly near the 3'-end of the 23S rRNA, where it nucleates assembly of the 50S subunit. This chain is Large ribosomal subunit protein uL3, found in Mycobacterium sp. (strain KMS).